A 319-amino-acid polypeptide reads, in one-letter code: Cytochrome f (319 aa).

The signal sequence occupies residues 1–34 (MQNRNTYDLKKKMTRLISVLVMIHIITRTSISNA). Residues Tyr35, Cys55, Cys58, and His59 each contribute to the heme site. The helical transmembrane segment at 285-304 (VKGLLLFLASVILAQIFLVL) threads the bilayer.

Belongs to the cytochrome f family. The 4 large subunits of the cytochrome b6-f complex are cytochrome b6, subunit IV (17 kDa polypeptide, petD), cytochrome f and the Rieske protein, while the 4 small subunits are PetG, PetL, PetM and PetN. The complex functions as a dimer. It depends on heme as a cofactor.

The protein resides in the plastid. Its subcellular location is the chloroplast thylakoid membrane. Component of the cytochrome b6-f complex, which mediates electron transfer between photosystem II (PSII) and photosystem I (PSI), cyclic electron flow around PSI, and state transitions. The chain is Cytochrome f (petA) from Picea abies (Norway spruce).